We begin with the raw amino-acid sequence, 2210 residues long: Orsellinic acid synthase ArmB (2210 aa).

The N-terminal acylcarrier protein transacylase domain (SAT) stretch occupies residues 38-261 (LLLDACHYAF…HKTTVDALYH (224 aa)). Positions 391-817 (QEPIAICGMS…GSNGALLLEE (427 aa)) constitute a Ketosynthase family 3 (KS3) domain. Active-site for beta-ketoacyl synthase activity residues include Cys561, His696, and His736. The interval 915–1240 (VFVFSGQGGQ…GLTLSSSLSQ (326 aa)) is malonyl-CoA:ACP transacylase (MAT) domain. The active-site For acyl/malonyl transferase activity is Ser1009. The tract at residues 1307–1437 (MLQSWAQFPS…GQFRPLLVVD (131 aa)) is N-terminal hotdog fold. Residues 1307 to 1614 (MLQSWAQFPS…FKKLRLNTLQ (308 aa)) form the PKS/mFAS DH domain. Positions 1336–1611 (ITGHIVGDVP…GMCFKKLRLN (276 aa)) are product template (PT) domain. His1339 serves as the catalytic Proton acceptor; for dehydratase activity. Residues 1464-1614 (AEVFTTRTAY…FKKLRLNTLQ (151 aa)) form a C-terminal hotdog fold region. The active-site Proton donor; for dehydratase activity is Asp1525. One can recognise a Carrier 1 domain in the interval 1660-1735 (VDVQNTVLNI…ELVREISSTV (76 aa)). Residue Ser1694 is modified to O-(pantetheine 4'-phosphoryl)serine. The disordered stretch occupies residues 1739 to 1761 (AATAVNTPETASTPEPTLQGDAS). The Carrier 2 domain maps to 1845–1922 (SSPSSDLVDT…AVNQYISSKR (78 aa)). Ser1882 carries the O-(pantetheine 4'-phosphoryl)serine modification. Residues 1920–1946 (SKRPGKSPKQVEETAMDPDREEDLSDL) are disordered. Acidic residues predominate over residues 1933-1944 (TAMDPDREEDLS). Residues 1963–2202 (VPMSVQKSSS…LGAVTQALVD (240 aa)) form a thioesterase (TE) domain region.

It functions in the pathway secondary metabolite biosynthesis. Functionally, non-reducing polyketide synthase, part of the gene cluster that mediates the biosynthesis of melleolides, a range of antifungal and phytotoxic polyketide derivatives composed of an orsellinic acid (OA) moiety esterified to various sesquiterpene alcohols. The first step in melleolides biosynthesis is performed by the delta(6)-protoilludene synthase PRO1 which catalyzes the cyclization of farnesyl diphosphate to protoilludene. The orsellinic acid synthase armB produces OA by condensing acetyl-CoA with 3 malonyl-CoA units in a three-round chain elongation reaction folowed by a C2-C7 ring closure. ArmB further catalyzes the trans-esterification of OA to the various sesquiterpene alcohols resulting from the hydroxylation of protoilludene. The melleolides cluster also includes 5 cytochrome P450 monooxygenases, 4 NAD(+)-dependent oxidoreductases, one flavin-dependent oxidoreductase, and one O-methyltransferase. The cytochrome P450 monooxygenases may be involved in protoilludene hydroxylation to elaborate melleolides with multiple alcohol groups, such as melleolide D, which carries alcohol functionalities at C-4, C-5, C-10, and C-13. The role of the NAD(+)-dependent enzymes remains unknown. Numerous melleolides, including arnamial, show 5'-O-methylation of the aromatic moiety which may be catalyzed by the methyltransferase encoded in the cluster. The flavin-dependent oxidoreductase might represent the dehydrogenase yielding the aldehyde in position 1 of arnamial and other melleolides. Finally, several halogenase localized outside of the cluster (armH1 to armH5), are able to catalyze the transfer of a single chlorine atom to the melleolide backbone, resulting in a 6'-chloromelleolide product. The sequence is that of Orsellinic acid synthase ArmB from Armillaria ostoyae (Armillaria root rot fungus).